A 218-amino-acid chain; its full sequence is Large ribosomal subunit protein bL25 (218 aa).

The interval 186–218 (AVEEEVPAEDEEIMPEPEVIGEEDEGDEEEPEE) is disordered.

Belongs to the bacterial ribosomal protein bL25 family. CTC subfamily. As to quaternary structure, part of the 50S ribosomal subunit; part of the 5S rRNA/L5/L18/L25 subcomplex. Contacts the 5S rRNA. Binds to the 5S rRNA independently of L5 and L18.

Its function is as follows. This is one of the proteins that binds to the 5S RNA in the ribosome where it forms part of the central protuberance. The sequence is that of Large ribosomal subunit protein bL25 from Halothermothrix orenii (strain H 168 / OCM 544 / DSM 9562).